Reading from the N-terminus, the 1558-residue chain is ABC transporter NFT1 (1558 aa).

Residues 1-29 (MIKNGTCPFWERDDLSECARREYIEFKFP) lie on the Extracellular side of the membrane. An N-linked (GlcNAc...) asparagine glycan is attached at N4. A helical membrane pass occupies residues 30-50 (LFILLTGMIYAFCKVFRAFYL). At 51-103 (RRKNHTNEAPEFEEQGNGNHEYARFSVLRLKSAWESRSFCNVNNRSTFDKFKK) the chain is on the cytoplasmic side. The helical transmembrane segment at 104-124 (FIEGAFIVLQLTIHLYILSNM) threads the bilayer. Over 125 to 130 (PMDNKK) the chain is Extracellular. The helical transmembrane segment at 131–151 (FFHQGFLVQMFLWILLLVVIT) threads the bilayer. The Cytoplasmic portion of the chain corresponds to 152 to 169 (LRLISASQSFRWVLACKR). The chain crosses the membrane as a helical span at residues 170-190 (DLWAVSFYSYASLFTLSILPL). Over 191 to 201 (RSVFIGKIKDK) the chain is Extracellular. The helical transmembrane segment at 202–222 (IMVKYIISETFIDLALLLLLS) threads the bilayer. Topologically, residues 223-302 (TSSIEGTRYS…SSKKGRLLPN (80 aa)) are cytoplasmic. A helical transmembrane segment spans residues 303 to 323 (IICYFKAVFISQLFLAFVSSF). The ABC transmembrane type-1 1 domain occupies 311–621 (FISQLFLAFV…IASTVSLLIQ (311 aa)). Residues 324–351 (LNFVPSLLMPRILSYVNDPKSQSWNLVS) are Extracellular-facing. The helical transmembrane segment at 352-374 (LYVSSMLVSKIIATTCRGQGLFL) threads the bilayer. Residues 375-449 (GEKGTMQLRT…VMSIDAFKVS (75 aa)) are Cytoplasmic-facing. A disordered region spans residues 410-434 (NASTSFEENPDSSEAEPRKKSSRKD). Residues 424 to 434 (AEPRKKSSRKD) show a composition bias toward basic and acidic residues. A helical transmembrane segment spans residues 450 to 470 (EAMNTFYLACEAVFMTVTALM). Residues 471 to 481 (ILYSLLGWSAF) lie on the Extracellular side of the membrane. A helical membrane pass occupies residues 482 to 504 (AGTFALLAMIPLNFWCATFYGNY). Topologically, residues 505 to 558 (QADQLILTDKRTSGISEALNSIRVIKLLAWENLFYQKIINVRDGEIRLLKKKAT) are cytoplasmic. The helical transmembrane segment at 559 to 579 (IFFLNHLIWFFGPTLVSAITF) threads the bilayer. Topologically, residues 580 to 584 (SVFIK) are extracellular. A helical transmembrane segment spans residues 585–605 (FQNQTLTPTIAFTALSLFAIL). Residues 606–953 (RTPMDQIAST…KFSAYKWLAD (348 aa)) are Cytoplasmic-facing. Residues 651–892 (FGFEDASMEW…NEFLRESINN (242 aa)) form the ABC transporter 1 domain. Residue 686 to 693 (GPTGSGKS) coordinates ATP. The segment covering 892 to 901 (NDSKNTTHNQ) has biased composition (polar residues). Residues 892 to 926 (NDSKNTTHNQIDLKRSTTSKKTKNGDPEGENSQDE) are disordered. A helical membrane pass occupies residues 954–974 (YFGGLGVVFVFTSSAILIHGI). The 291-residue stretch at 961-1251 (VFVFTSSAIL…IIKVFSSVEL (291 aa)) folds into the ABC transmembrane type-1 2 domain. Residues 975 to 1013 (TLSQGFWLRYWLETGSSGSKSTWLYRIVEGHSNIYFILT) are Extracellular-facing. A helical membrane pass occupies residues 1014 to 1034 (YIVIGFVSSFLTSGKVWIAII). The Cytoplasmic segment spans residues 1035–1082 (SGTNVTKKIFAKLLSSILYAKLRFHNVTPTGRIMNRFSKDMDIIDQQL). The chain crosses the membrane as a helical span at residues 1083–1105 (IPNFEGLSYSVVVCLWIILLIGY). At 1106-1109 (VTPQ) the chain is on the extracellular side. A helical transmembrane segment spans residues 1110-1132 (FLLFAIPLCALYYTVCTLYLRAS). Over 1133-1199 (RELKRIDNIN…ATEWITYRVD (67 aa)) the chain is Cytoplasmic. The helical transmembrane segment at 1200-1220 (IIGTLVLFSSSVMIIMKASYL) threads the bilayer. Residues 1221-1222 (DA) are Extracellular-facing. A helical transmembrane segment spans residues 1223-1243 (GLAGILLSNAFSFTETAQWII). The Cytoplasmic portion of the chain corresponds to 1244-1558 (KVFSSVELLM…LAKVSFDNKR (315 aa)). Residues 1285 to 1538 (VELKNLSLRY…RNTIFYRLCR (254 aa)) enclose the ABC transporter 2 domain. 1319-1326 (GRTGAGKS) contributes to the ATP binding site.

It belongs to the ABC transporter superfamily. ABCC family. Conjugate transporter (TC 3.A.1.208) subfamily.

The protein resides in the membrane. In Saccharomyces cerevisiae (strain YJM789) (Baker's yeast), this protein is ABC transporter NFT1 (NFT1).